Reading from the N-terminus, the 159-residue chain is MAEQVVEILVTGGKATAGPPLGPAIGPLGVNIMQVVQMINTKTKDYEGMSVPVKVIVETTKRTFEVEVGIPPASALIKKELGLESGSQEPKHKVAGNITMEKIVKIAKMKQDAMLAYTLKSAAKEVIGTCVSVGVNVEGKTPKEAQKAVDAGEFDSYFN.

The protein belongs to the universal ribosomal protein uL11 family. Part of the ribosomal stalk of the 50S ribosomal subunit. Interacts with L10 and the large rRNA to form the base of the stalk. L10 forms an elongated spine to which L12 dimers bind in a sequential fashion forming a multimeric L10(L12)X complex.

Forms part of the ribosomal stalk which helps the ribosome interact with GTP-bound translation factors. This is Large ribosomal subunit protein uL11 from Methanococcus vannielii (strain ATCC 35089 / DSM 1224 / JCM 13029 / OCM 148 / SB).